The chain runs to 309 residues: Serine/threonine-protein phosphatase 2A catalytic subunit alpha isoform (309 aa).

Asp57, His59, Asp85, and Asn117 together coordinate Mn(2+). Asp57, His59, and Asp85 together coordinate Zn(2+). The Fe(3+) site is built by Asp85 and Asn117. The active-site Proton donor is the His118. His167 and His241 together coordinate Mn(2+). The Fe(3+) site is built by His167 and His241. Tyr307 is modified (phosphotyrosine). Leu309 carries the leucine methyl ester modification.

The protein belongs to the PPP phosphatase family. PP-1 subfamily. In terms of assembly, PP2A consists of a common heterodimeric core enzyme composed of PPP2CA, a 36 kDa catalytic subunit (subunit C), and PPP2R1A, a 65 kDa constant regulatory subunit (PR65 or subunit A), that associates with a variety of regulatory subunits. Proteins that associate with the core dimer include three families of regulatory subunits B (the R2/B/PR55/B55, R3/B''/PR72/PR130/PR59 and R5/B'/B56 families), the 48 kDa variable regulatory subunit, viral proteins, and cell signaling molecules. Interacts with the PP2A A subunit PPP2R1A. Interacts with the regulatory subunit PPP2R2A. Interacts (via C-terminus) with PTPA. Interacts with NXN; the interaction is direct. Interacts with KCTD20. Interacts with BTBD10. Interacts with SGO1 and SGO2. Interacts with RAF1. Interaction with IGBP1 protects unassembled PPP2CA from degradative ubiquitination. Interacts with GSK3B (via C2 domain). Interacts with MFHAS1; retains PPP2CA into the cytoplasm and excludes it from the nucleus. Interacts with PABIR1/FAM122A. Interacts with ADCY8; interaction is phosphatase activity-dependent; antagonizes interaction between ADCY8 and calmodulin. Interacts with CRTC3 (when phosphorylated at 'Ser-391'). Interacts with SPRY2; the interaction is inhibited by TESK1 interaction with SPRY2, possibly by vesicular sequestration of SPRY2. Interacts with TRAF3IP3. Interacts with AMBRA1 (via PxP motifs); enhancing interaction between PPP2CA and MYC or FOXO3. Forms a complex with AMBRA1 and BECN1; AMBRA1 and BECN1 components of the complex regulate MYC stability via different pathways. Part of the core of STRIPAK complexes composed of PP2A catalytic and scaffolding subunits, the striatins (PP2A regulatory subunits), the striatin-associated proteins MOB4, STRIP1 and STRIP2, PDCD10 and members of the STE20 kinases, such as STK24 and STK26. Phosphatase component of the Integrator-PP2A (INTAC) complex, composed of the Integrator core complex and protein phosphatase 2A subunits PPP2CA and PPP2R1A. It depends on Mn(2+) as a cofactor. Fe(3+) is required as a cofactor. Zn(2+) serves as cofactor. Post-translationally, reversibly methyl esterified on Leu-309 by leucine carboxyl methyltransferase 1 (Lcmt1) and protein phosphatase methylesterase 1 (Ppme1). Carboxyl methylation influences the affinity of the catalytic subunit for the different regulatory subunits, thereby modulating the PP2A holoenzyme's substrate specificity, enzyme activity and cellular localization. In terms of processing, phosphorylation of either threonine (by autophosphorylation-activated protein kinase) or tyrosine results in inactivation of the phosphatase. Auto-dephosphorylation has been suggested as a mechanism for reactivation. Polyubiquitinated, leading to its degradation by the proteasome.

Its subcellular location is the cytoplasm. The protein localises to the nucleus. The protein resides in the chromosome. It is found in the centromere. It localises to the cytoskeleton. Its subcellular location is the spindle pole. It catalyses the reaction O-phospho-L-seryl-[protein] + H2O = L-seryl-[protein] + phosphate. It carries out the reaction O-phospho-L-threonyl-[protein] + H2O = L-threonyl-[protein] + phosphate. Inhibited by the interaction between PPP2R2A and ARPP19; this inhibition is enhanced when ARPP19 is phosphorylated. Inhibited by the interaction between PPP2R2A and PABIR1/FAM122A. Its function is as follows. Catalytic subunit of protein phosphatase 2A (PP2A), a serine/threonine phosphatase involved in the regulation of a wide variety of enzymes, signal transduction pathways, and cellular events. PP2A is the major phosphatase for microtubule-associated proteins (MAPs). PP2A can modulate the activity of phosphorylase B kinase casein kinase 2, mitogen-stimulated S6 kinase, and MAP-2 kinase. Cooperates with SGO2 to protect centromeric cohesin from separase-mediated cleavage in oocytes specifically during meiosis I. Can dephosphorylate various proteins, such as AXIN1, p53/TP53, PIM3, WEE1. Activates RAF1 by dephosphorylating it at 'Ser-259'. Mediates dephosphorylation of WEE1, preventing its ubiquitin-mediated proteolysis, increasing WEE1 protein levels, and promoting the G2/M checkpoint. Mediates dephosphorylation of MYC; promoting its ubiquitin-mediated proteolysis: interaction with AMBRA1 enhances interaction between PPP2CA and MYC. Mediates dephosphorylation of FOXO3; promoting its stabilization: interaction with AMBRA1 enhances interaction between PPP2CA and FOXO3. Catalyzes dephosphorylation of the pyrin domain of NLRP3, promoting assembly of the NLRP3 inflammasome. Together with RACK1 adapter, mediates dephosphorylation of AKT1 at 'Ser-473', preventing AKT1 activation and AKT-mTOR signaling pathway. Dephosphorylation of AKT1 is essential for regulatory T-cells (Treg) homeostasis and stability. Catalyzes dephosphorylation of PIM3, promotinh PIM3 ubiquitination and proteasomal degradation. Part of the striatin-interacting phosphatase and kinase (STRIPAK) complexes. STRIPAK complexes have critical roles in protein (de)phosphorylation and are regulators of multiple signaling pathways including Hippo, MAPK, nuclear receptor and cytoskeleton remodeling. Different types of STRIPAK complexes are involved in a variety of biological processes such as cell growth, differentiation, apoptosis, metabolism and immune regulation. Key mediator of a quality checkpoint during transcription elongation as part of the Integrator-PP2A (INTAC) complex. The INTAC complex drives premature transcription termination of transcripts that are unfavorably configured for transcriptional elongation: within the INTAC complex, PPP2CA catalyzes dephosphorylation of the C-terminal domain (CTD) of Pol II subunit POLR2A/RPB1 and SUPT5H/SPT5, thereby preventing transcriptional elongation. This is Serine/threonine-protein phosphatase 2A catalytic subunit alpha isoform (Ppp2ca) from Rattus norvegicus (Rat).